We begin with the raw amino-acid sequence, 361 residues long: Putative F-box protein At3g19560 (361 aa).

Residues 3–49 (MTMMSDISQDLLEEILSRVPITSLRAVKSTCKRWKDLLNDPSFSKKY) form the F-box domain.

The polypeptide is Putative F-box protein At3g19560 (Arabidopsis thaliana (Mouse-ear cress)).